We begin with the raw amino-acid sequence, 861 residues long: Bifunctional uridylyltransferase/uridylyl-removing enzyme (861 aa).

A uridylyltransferase region spans residues 1–321; it reads MKNDNRIIKN…VYHQKQKIIR (321 aa). Positions 322 to 678 are uridylyl-removing; sequence LDDEFQLSNR…IMPHHSQGGT (357 aa). The 123-residue stretch at 440–562 folds into the HD domain; it reads VDQHTLFVIR…LPHARYLDYL (123 aa). 2 ACT domains span residues 679-760 and 788-861; these read EVFI…AVSR and QLFL…KSKY.

Belongs to the GlnD family. Mg(2+) serves as cofactor.

The catalysed reaction is [protein-PII]-L-tyrosine + UTP = [protein-PII]-uridylyl-L-tyrosine + diphosphate. It carries out the reaction [protein-PII]-uridylyl-L-tyrosine + H2O = [protein-PII]-L-tyrosine + UMP + H(+). Its activity is regulated as follows. Uridylyltransferase (UTase) activity is inhibited by glutamine, while glutamine activates uridylyl-removing (UR) activity. Functionally, modifies, by uridylylation and deuridylylation, the PII regulatory proteins (GlnB and homologs), in response to the nitrogen status of the cell that GlnD senses through the glutamine level. Under low glutamine levels, catalyzes the conversion of the PII proteins and UTP to PII-UMP and PPi, while under higher glutamine levels, GlnD hydrolyzes PII-UMP to PII and UMP (deuridylylation). Thus, controls uridylylation state and activity of the PII proteins, and plays an important role in the regulation of nitrogen assimilation and metabolism. This is Bifunctional uridylyltransferase/uridylyl-removing enzyme from Legionella pneumophila subsp. pneumophila (strain Philadelphia 1 / ATCC 33152 / DSM 7513).